A 605-amino-acid chain; its full sequence is Protein ZRG17 (605 aa).

Residues 1-225 (METPQMNAIQ…DLLSNLPWPK (225 aa)) lie on the Cytoplasmic side of the membrane. Phosphoserine occurs at positions 16 and 131. The tract at residues 118–178 (PAPKLVPPPP…PSSAASRTSF (61 aa)) is disordered. The span at 143-176 (SKRSSMTLDSPFNFTTSTLQPHQQTPPSSAASRT) shows a compositional bias: polar residues. The helical transmembrane segment at 226 to 246 (AYIQLSIAALQIFACLITFQV) threads the bilayer. The Lumenal portion of the chain corresponds to 247 to 254 (GHLYSWSN). A helical transmembrane segment spans residues 255–275 (FITLSHFITYDIIGSLVIIFV). The Cytoplasmic portion of the chain corresponds to 276-287 (ENLSQFQVWFTG). Residues 288–308 (TITFPFGLNRIDVLLSFALAV) form a helical membrane-spanning segment. S309 is a topological domain (lumenal). The chain crosses the membrane as a helical span at residues 310–330 (LCFVGLDLLFHIIEEFIVLFV). Residues 331 to 363 (ESGSSLTNNHDHDEINEQIPHSHIANANDSQNE) lie on the Cytoplasmic side of the membrane. The helical transmembrane segment at 364 to 384 (NITLWYSILMINLVLSTLSLY) threads the bilayer. The Lumenal segment spans residues 385-399 (KTFYANKYSNLKTKN). The chain crosses the membrane as a helical span at residues 400 to 420 (PIITITYTAYLFIYPLLLDLL). At 421–422 (SS) the chain is on the cytoplasmic side. Residues 423-443 (ISDYLATLVISSLILWHGLTI) form a helical membrane-spanning segment. Residues 444–545 (ARWTSTVLLM…ERLSEFKSRY (102 aa)) are Lumenal-facing. The span at 473–482 (DTTAHTQQVE) shows a compositional bias: polar residues. The tract at residues 473 to 497 (DTTAHTQQVESKAAKEKPSVRPRSM) is disordered. Residue S498 is modified to Phosphoserine. Residues 546–566 (ILNYDDIVISKVNFTLYVVLI) traverse the membrane as a helical segment. The Cytoplasmic segment spans residues 567-605 (KITMKGGSDDDELMLRLAIDKCIQTSIPTCETTIDIDRI).

The protein resides in the endoplasmic reticulum membrane. The sequence is that of Protein ZRG17 (ZRG17) from Saccharomyces cerevisiae (strain ATCC 204508 / S288c) (Baker's yeast).